A 143-amino-acid chain; its full sequence is Transcriptional regulator SlyA (143 aa).

Residues 2–135 (ESTLGSDLAR…LANLIERLEQ (134 aa)) form the HTH marR-type domain. Positions 49–72 (QIQLAKAIGIEQPSLVRTLDQLED) form a DNA-binding region, H-T-H motif.

The protein belongs to the SlyA family. As to quaternary structure, homodimer.

Functionally, transcription regulator that can specifically activate or repress expression of target genes. The polypeptide is Transcriptional regulator SlyA (Edwardsiella ictaluri (strain 93-146)).